A 422-amino-acid chain; its full sequence is MTVTIENIHAREIFDSRGNPTVEVDVRLTDGTLGRAAVPSGASTGDREAVELRDGGDRLQGKGVSKAVANVNGEIYEALKGQSPFNQAKLDHLMIELDGTKNKSRLGANAILGVSMAISRAAANSEKIPLYRYLGGVDLELPQPFFNVINGGVHADSGIDVQEFLITPVKRESFRDGLEKIANIYHTLKKILADKGLETAVGDEGGFAPKLGSTENAIATLYQAIESAGYVPGEEIAIAIDPASSEFYDDKEKVYRFEGQKLTSKELLTYYENLVEKYPALISIEDGFSEHDWEGFAAQTKAQGQKIQLVGDDIFVTNPEIFKEGIKKGVANAILIKLNQIGTVTEAIEAISLARKAGYKTMISHRSGETVDSYIADFAVAMHAGQIKTGSMARSERVEKYNQFLRIEEELGKDVALASFPG.

Residue Q162 participates in (2R)-2-phosphoglycerate binding. E204 (proton donor) is an active-site residue. Residues D241, E285, and D312 each coordinate Mg(2+). Residues K337, R366, S367, and K388 each contribute to the (2R)-2-phosphoglycerate site. The active-site Proton acceptor is the K337.

It belongs to the enolase family. It depends on Mg(2+) as a cofactor.

Its subcellular location is the cytoplasm. It is found in the secreted. It localises to the cell surface. It carries out the reaction (2R)-2-phosphoglycerate = phosphoenolpyruvate + H2O. It functions in the pathway carbohydrate degradation; glycolysis; pyruvate from D-glyceraldehyde 3-phosphate: step 4/5. Its function is as follows. Catalyzes the reversible conversion of 2-phosphoglycerate (2-PG) into phosphoenolpyruvate (PEP). It is essential for the degradation of carbohydrates via glycolysis. The sequence is that of Enolase 2 from Lactococcus lactis subsp. lactis (strain IL1403) (Streptococcus lactis).